Reading from the N-terminus, the 124-residue chain is BLOC-1-related complex subunit 8 (124 aa).

The interval 102–124 (SSSQGRSAVINPNETPAHTSVTP) is disordered.

This sequence belongs to the BORCS8 family.

It is found in the lysosome membrane. As part of a BORC-like complex, it may play a role in the movement and localization of lysosomes at the cell periphery. Associated with the cytosolic face of lysosomes, this complex may couple lysosomes to microtubule plus-end-directed kinesin motors, driving lysosome movement toward the cell periphery. This Danio rerio (Zebrafish) protein is BLOC-1-related complex subunit 8.